A 156-amino-acid chain; its full sequence is MASYFDEHNCEPTVPEEQYRQNALLELARSLLSGMDIDLGAVDFTEWDQRLPPPASKKVVESLPKVTVTPEQADAALKCPVCLLEFEEGETVRQLPCEHLFHSACILPWLGKTNSCPLCRHELPTDSPDYEEFKQEKARRQQKEHRLECLHGAMYT.

The RING-type; atypical zinc-finger motif lies at 79–120; it reads CPVCLLEFEEGETVRQLPCEHLFHSACILPWLGKTNSCPLCR.

This sequence belongs to the RNF181 family.

The catalysed reaction is S-ubiquitinyl-[E2 ubiquitin-conjugating enzyme]-L-cysteine + [acceptor protein]-L-lysine = [E2 ubiquitin-conjugating enzyme]-L-cysteine + N(6)-ubiquitinyl-[acceptor protein]-L-lysine.. The protein operates within protein modification; protein ubiquitination. In terms of biological role, E3 ubiquitin-protein ligase which accepts ubiquitin from an E2 ubiquitin-conjugating enzyme in the form of a thioester and then directly transfers the ubiquitin to targeted substrates. Catalyzes monoubiquitination of 26S proteasome subunit PSMC2/RPT1. In Xenopus laevis (African clawed frog), this protein is E3 ubiquitin-protein ligase RNF181 (rnf181).